A 676-amino-acid chain; its full sequence is Zinc finger CCCH domain-containing protein 38 (676 aa).

Disordered regions lie at residues 1-134 (MEMS…DHLF), 172-217 (SSDY…RSSN), 245-307 (RKQP…SWID), 487-506 (SVQPNQATTQSNVVSSNPNQ), and 533-594 (IQEV…DPKG). The span at 12 to 21 (SKWDSKEDTH) shows a compositional bias: basic and acidic residues. Over residues 58-79 (RVSQNNDNSYFSEQDGTRQQFV) the composition is skewed to polar residues. Composition is skewed to basic and acidic residues over residues 101-110 (ARRDAGSYDR), 124-134 (EFNKRGSDHLF), and 192-212 (SEFTGEKETQRRDGGDGEGGF). Residues 214 to 243 (RSSNIPCKFFAAGTGFCRNGKYCRFSHHVA) form a C3H1-type zinc finger. The span at 251-262 (NNNNFYRQDNNN) shows a compositional bias: low complexity. Over residues 269 to 278 (KWNDVERLDN) the composition is skewed to basic and acidic residues. Basic and acidic residues predominate over residues 538–562 (LDPKENGDKKTDEASKEEEGKKTGE). The span at 563–583 (DTNDAENVVDEDEDGDDDGSD) shows a compositional bias: acidic residues. The span at 584–594 (EENKKEKDPKG) shows a compositional bias: basic and acidic residues.

The protein is Zinc finger CCCH domain-containing protein 38 of Arabidopsis thaliana (Mouse-ear cress).